A 672-amino-acid polypeptide reads, in one-letter code: F(420)H(2) dehydrogenase subunit L (672 aa).

Helical transmembrane passes span 8-28 (EFAF…FFFG), 37-57 (IVPI…TLGL), 79-99 (ILID…SLLI), 136-156 (ILQL…LIGF), 179-199 (VMFL…SGGF), 225-245 (ILGF…GGAV), 265-285 (TTVS…YLVA), 298-318 (LMVV…MGIV), 337-357 (MMLG…ISLF), 360-380 (INHA…IHAV), 394-414 (VMPI…GFGI), 447-467 (YVFS…LIFM), 483-503 (PAIM…FGAL), 545-565 (LAVL…AFVI), 601-621 (FSIG…DVII), and 652-672 (TALI…MEVL).

This sequence belongs to the complex I subunit 5 family. In terms of assembly, the FPO complex is composed of at least 13 different subunits. FpoA, FpoH, FpoJ, FpoK, FpoL, FpoM and FpoN proteins constitute the membrane sector of the complex.

The protein localises to the cell membrane. It carries out the reaction methanophenazine + reduced coenzyme F420-(gamma-L-Glu)(n) = dihydromethanophenazine + oxidized coenzyme F420-(gamma-L-Glu)(n) + H(+). Functionally, component of the F(420)H(2) dehydrogenase (FPO complex) which is part of the energy-conserving F(420)H(2):heterodisulfide oxidoreductase system. The membrane-bound electron transfer system of the complex plays an important role in the metabolism of methylotrophic methanogens when the organisms grow on methanol or methylamines. Catalyzes the oxidation of methanophenazine to dihydromethanophenazine. It shuttles electrons from F(420)H(2), via FAD and iron-sulfur (Fe-S) centers, to methanophenazine (an electron carrier in the membrane). It couples the redox reaction to proton translocation (for every two electrons transferred, two hydrogen ions are translocated across the cytoplasmic membrane), and thus conserves the redox energy in a proton gradient. It also catalyzes the oxidation of F(420)H(2) with quinones such as 2,3-dimethyl-1,4-naphthoquinone, 2-methyl-1,4-naphthoquinone and tetramethyl-p-benzoquinone. This is F(420)H(2) dehydrogenase subunit L (fpoL) from Methanosarcina mazei (strain ATCC BAA-159 / DSM 3647 / Goe1 / Go1 / JCM 11833 / OCM 88) (Methanosarcina frisia).